The sequence spans 309 residues: tRNA-dihydrouridine(16) synthase (309 aa).

Residues Pro-7–Glu-9 and Gln-68 each bind FMN. The active-site Proton donor is Cys-98. Residues Arg-137, Asn-198, and Gly-220–Cys-221 each bind FMN.

It belongs to the Dus family. DusC subfamily. FMN serves as cofactor.

It carries out the reaction 5,6-dihydrouridine(16) in tRNA + NADP(+) = uridine(16) in tRNA + NADPH + H(+). The catalysed reaction is 5,6-dihydrouridine(16) in tRNA + NAD(+) = uridine(16) in tRNA + NADH + H(+). In terms of biological role, catalyzes the synthesis of 5,6-dihydrouridine (D), a modified base found in the D-loop of most tRNAs, via the reduction of the C5-C6 double bond in target uridines. Specifically modifies U16 in tRNAs. The sequence is that of tRNA-dihydrouridine(16) synthase from Azotobacter vinelandii.